Consider the following 154-residue polypeptide: Aspartate carbamoyltransferase regulatory chain (154 aa).

Cys-109, Cys-114, Cys-138, and Cys-141 together coordinate Zn(2+).

This sequence belongs to the PyrI family. Contains catalytic and regulatory chains. Requires Zn(2+) as cofactor.

Involved in allosteric regulation of aspartate carbamoyltransferase. The chain is Aspartate carbamoyltransferase regulatory chain from Aeromonas hydrophila subsp. hydrophila (strain ATCC 7966 / DSM 30187 / BCRC 13018 / CCUG 14551 / JCM 1027 / KCTC 2358 / NCIMB 9240 / NCTC 8049).